Here is a 1240-residue protein sequence, read N- to C-terminus: MPPNSKSKRRKNKSKQHNKKNGNSDPEQSINPTQLVPRMEPELYHTESDYPTSRVIKRAPNGDVIVEPINTDDDKKERTANLTHNKDSMDSASSLAFTLDSHWESLSPEEKKTILRIEKEEVFNVIRNYQDDHSCSCSVCGRRHLAMDQEMERIYNTLYAMDKDKDPETNPIKFHLGIIKELQISKNQQQNDLSSTKGEVVKNFLSSSTVGSLKEEVLHFKQKQLSKQEQAHNETADNTSLLEENLNNIHINKTSSEISANFNSVSDEELQQKYSNFTKTFISSHPKIAEEYVQKMMMYPNIRALTDDLMNSNGQGFLNAIEDFVRDGQIQASKKDDSITEDEASSTDLTDPKEFTTMLHSGKPLTEDEYADLQRNIAERMTNAYDTASKKFKDVSQLEKELFTRFMSGRDKKSFRELIIQSFKNKFDGELGPSVLAATLSSCFSSQSKDTSLDTDSIYEDEDEEDYDDYSEYAEDSEEVSEYEGIEAVEKPEHDEKSNGIRETLHLSYDHDHKRQNHPHHHYHSTSTHSEDELSEEEYISDIELPHDPHKHFHRDDDILDGDEDEPEEEDENEGDDEEDTYDSGLDETDRLEEGRKLIQIAITKLLQSRIMASYHEKQADNNRLKLLQELEEEKRKKREKEEKKQKKREKEKEKKRLQQLAKEEEKRKREEEKERLKKELEEREMRRREAQRKKVEEAKRKKDEERKRRLEEQQRREEMQEKQRKQKEELKRKREEEKKRIREQKRLEQEKLQKEKEEEERQRLIAEDALRKQKLNEEQTSANILSAKPFTENGVGNPVSSQSHPNMTNYQEDNSCSINDEILKMVNSVAASKPVSPTGFNVHDLLLPSTNNQMPAMEQSHLSQPGNQNNHFGTTTIPNALDLATKSSLQTENNYLMNSQTLENTSLLMHNNSSPTKLLPNDFGLSSWGGLTNTMSINPTCKPPVIQTSEMKSQAHKSSPQATMPSFGLPNGGTHRKSFTDELNTLTSMLSSSGFADTSLSSSGFPPSQRSVWNDQKSSFSGPSTAGNFNNSSIQSGMLLAPTLGSVESFPNRTSIWDSSTTPMMNKSELSGRNITSTAQDSPAFMASNIWSSNSQYNSPYLTSNVLQSPQISSGVDESHILDSIYNTYLAISPQDSLNPYIAIGTLFQNLVGLNLDYSTFINKLISMQGAYNCEFFTDNNGSITHVRFARQTPAGHSKGLLNQLFSGLNDPTATPFTSRPHTSTGASFPIASSTTQTS.

Residues 1-20 are compositionally biased toward basic residues; sequence MPPNSKSKRRKNKSKQHNKK. The interval 1-76 is disordered; it reads MPPNSKSKRR…EPINTDDDKK (76 aa). A compositionally biased stretch (polar residues) spans 25-34; that stretch reads DPEQSINPTQ. Over residues 39 to 48 the composition is skewed to basic and acidic residues; it reads MEPELYHTES. Ser266 is modified (phosphoserine). 5 disordered regions span residues 446–593, 634–744, 953–980, 998–1029, and 1214–1240; these read SQSK…DRLE, EKRK…RIRE, KSQA…RKSF, DTSL…TAGN, and TATP…TQTS. A compositionally biased stretch (acidic residues) spans 457-487; that stretch reads SIYEDEDEEDYDDYSEYAEDSEEVSEYEGIE. Residues 488–513 show a composition bias toward basic and acidic residues; sequence AVEKPEHDEKSNGIRETLHLSYDHDH. Basic residues predominate over residues 514 to 524; sequence KRQNHPHHHYH. The segment covering 558–587 has biased composition (acidic residues); the sequence is DILDGDEDEPEEEDENEGDDEEDTYDSGLD. Residues 616-777 are a coiled coil; that stretch reads HEKQADNNRL…EDALRKQKLN (162 aa). The span at 953–965 shows a compositional bias: polar residues; it reads KSQAHKSSPQATM.

The protein belongs to the NST1 family. Interacts with MSL1.

The protein localises to the cytoplasm. Its function is as follows. With MSL1, acts as a negative regulator of salt tolerance. This Saccharomyces cerevisiae (strain YJM789) (Baker's yeast) protein is Stress response protein NST1 (NST1).